Reading from the N-terminus, the 308-residue chain is 1-acyl-sn-glycerol-3-phosphate acyltransferase (308 aa).

3 helical membrane-spanning segments follow: residues Phe65–Trp85, Ala124–Pro144, and Val148–Ala168. The HXXXXD motif motif lies at His130–Asp135.

This sequence belongs to the 1-acyl-sn-glycerol-3-phosphate acyltransferase family.

It localises to the membrane. The enzyme catalyses a 1-acyl-sn-glycero-3-phosphate + an acyl-CoA = a 1,2-diacyl-sn-glycero-3-phosphate + CoA. Its function is as follows. Converts lysophosphatidic acid (LPA) into phosphatidic acid by incorporating acyl moiety at the 2 position. This enzyme shows a preference for medium-chain-length fatty acyl-coenzyme a substrates. In Cocos nucifera (Coconut palm), this protein is 1-acyl-sn-glycerol-3-phosphate acyltransferase.